A 426-amino-acid chain; its full sequence is Enolase (426 aa).

A (2R)-2-phosphoglycerate-binding site is contributed by glutamine 162. Glutamate 204 functions as the Proton donor in the catalytic mechanism. Mg(2+) is bound by residues aspartate 241, glutamate 284, and aspartate 311. 4 residues coordinate (2R)-2-phosphoglycerate: lysine 336, arginine 365, serine 366, and lysine 387. Lysine 336 functions as the Proton acceptor in the catalytic mechanism.

It belongs to the enolase family. In terms of assembly, component of the RNA degradosome, a multiprotein complex involved in RNA processing and mRNA degradation. Mg(2+) serves as cofactor.

Its subcellular location is the cytoplasm. It is found in the secreted. The protein localises to the cell surface. The enzyme catalyses (2R)-2-phosphoglycerate = phosphoenolpyruvate + H2O. The protein operates within carbohydrate degradation; glycolysis; pyruvate from D-glyceraldehyde 3-phosphate: step 4/5. Catalyzes the reversible conversion of 2-phosphoglycerate (2-PG) into phosphoenolpyruvate (PEP). It is essential for the degradation of carbohydrates via glycolysis. In Thioalkalivibrio sulfidiphilus (strain HL-EbGR7), this protein is Enolase.